The chain runs to 375 residues: Sperm microtubule associated protein 2 (375 aa).

Positions 1–78 are disordered; it reads MGELGEHRAS…MAGEELPETS (78 aa). Positions 59 to 75 are enriched in acidic residues; it reads EPEEEIPPEEMAGEELP. 7 THEG repeats span residues 110–129, 176–195, 214–233, 250–269, 282–301, 318–337, and 352–371; these read AKGRKKRSRRLLELAKPKTN, TITVPVVSQRMEELSRPKRF, STLEYQASNRLKQLATPKVR, AAQMAVPTPRTLRLAKPRPP, PKPYVSDYNRLLQLATPKAL, VTKNAVASSRIISLAQPKIR, and ASLVAQASPRIYELATPKYI. Ser-287 is modified (phosphoserine).

In terms of assembly, interacts with CCT5. As to expression, testis specific (at protein level). Specifically expressed in spermatids; Sertoli cells maintain the level of expression in spermatids. If isolated spermatids are cultivated for 16 hours alone, the expression of THEG is down-regulated. May require signals from Sertoli cells to initiate changes in its gene expression through spermatogenesis.

It localises to the nucleus. Its function is as follows. May be involved (but not essential) in spermatogenesis. The protein is Sperm microtubule associated protein 2 of Mus musculus (Mouse).